A 216-amino-acid polypeptide reads, in one-letter code: Large ribosomal subunit protein uL4 (216 aa).

The segment at 51-78 is disordered; it reads KGRSEVHGSNTKPYKQKGTGRARRGDKK. Residues 64 to 76 show a composition bias toward basic residues; the sequence is YKQKGTGRARRGD.

Belongs to the universal ribosomal protein uL4 family. Part of the 50S ribosomal subunit.

In terms of biological role, one of the primary rRNA binding proteins, this protein initially binds near the 5'-end of the 23S rRNA. It is important during the early stages of 50S assembly. It makes multiple contacts with different domains of the 23S rRNA in the assembled 50S subunit and ribosome. Its function is as follows. Forms part of the polypeptide exit tunnel. This chain is Large ribosomal subunit protein uL4, found in Treponema pallidum (strain Nichols).